The following is a 121-amino-acid chain: Small ribosomal subunit protein uS13 (121 aa).

The tract at residues 95–121 is disordered; it reads LPVRGQNTKNNARTRKGKAVAIAGKKK. The segment covering 106–121 has biased composition (basic residues); the sequence is ARTRKGKAVAIAGKKK.

The protein belongs to the universal ribosomal protein uS13 family. In terms of assembly, part of the 30S ribosomal subunit. Forms a loose heterodimer with protein S19. Forms two bridges to the 50S subunit in the 70S ribosome.

Functionally, located at the top of the head of the 30S subunit, it contacts several helices of the 16S rRNA. In the 70S ribosome it contacts the 23S rRNA (bridge B1a) and protein L5 of the 50S subunit (bridge B1b), connecting the 2 subunits; these bridges are implicated in subunit movement. Contacts the tRNAs in the A and P-sites. The polypeptide is Small ribosomal subunit protein uS13 (Streptococcus thermophilus (strain CNRZ 1066)).